Here is a 659-residue protein sequence, read N- to C-terminus: Exocyst complex component 5 (659 aa).

Residues 1 to 58 (MRFEEEIGSLQMLCDQFQNKINTLEKQMNEEKKDYVQKLHRLHEKNGEAIDKMKQLDH) are a coiled coil.

The protein belongs to the SEC10 family. As to quaternary structure, the exocyst complex is composed of sec-3/exoc1, sec-5/exoc2, sec-6/exoc3, sec-8/exoc4, sec-10/exoc5, sec-15/exoc6, exo-70/exoc7 and exo-84/exoc8.

Its function is as follows. Component of the exocyst complex involved in the docking of exocytic vesicles with fusion sites on the plasma membrane. The sequence is that of Exocyst complex component 5 (sec-10) from Caenorhabditis elegans.